We begin with the raw amino-acid sequence, 62 residues long: MAKCYVTGKTTSFGNKRSHALNASRRTWKANLQTVRIKDENGNVKRVKISAKALKKLELERV.

It belongs to the bacterial ribosomal protein bL28 family.

This Acholeplasma laidlawii (strain PG-8A) protein is Large ribosomal subunit protein bL28.